Here is a 710-residue protein sequence, read N- to C-terminus: E3 ubiquitin-protein ligase TRIM9 (710 aa).

An RING-type zinc finger spans residues 10–50 (CPVCGSFYREPIILPCSHNLCQACARNILVQTPESESPQSR). Residue Thr-41 is modified to Phosphothreonine. Phosphoserine is present on residues Ser-44, Ser-46, Ser-49, and Ser-53. B box-type zinc fingers lie at residues 163-212 (AAAL…LVPP) and 224-266 (RKVS…VKAL). Positions 168, 171, 193, 198, 229, 232, 252, and 258 each coordinate Zn(2+). A coiled-coil region spans residues 273-340 (HKSQLSQALN…KAQLLARVNK (68 aa)). Residues 374-432 (IKENDPSGFLQISDALIRRVHLTEDQWGKGTLTPRMTTDFDLSLDNSPLLQSIHQLDFV) form the COS domain. One can recognise a Fibronectin type-III domain in the interval 440 to 535 (VPATPILQLE…KTLVLQTSEV (96 aa)). The 170-residue stretch at 533–702 (SEVAWFAFDP…LHTGLPVPDF (170 aa)) folds into the B30.2/SPRY domain.

Interacts with SNAP25. In terms of processing, auto-ubiquitinated. In terms of tissue distribution, brain (at protein level). Expressed in fetal and adult brain.

The protein localises to the cytoplasmic vesicle. Its subcellular location is the secretory vesicle. It is found in the synaptic vesicle. The protein resides in the synapse. It localises to the cytoplasm. The protein localises to the cytoskeleton. Its subcellular location is the cell projection. It is found in the dendrite. It carries out the reaction S-ubiquitinyl-[E2 ubiquitin-conjugating enzyme]-L-cysteine + [acceptor protein]-L-lysine = [E2 ubiquitin-conjugating enzyme]-L-cysteine + N(6)-ubiquitinyl-[acceptor protein]-L-lysine.. It functions in the pathway protein modification; protein ubiquitination. E3 ubiquitin-protein ligase which ubiquitinates itself in cooperation with an E2 enzyme UBE2D2/UBC4 and serves as a targeting signal for proteasomal degradation. May play a role in regulation of neuronal functions. May act as a regulator of synaptic vesicle exocytosis by controlling the availability of SNAP25 for the SNARE complex formation. The chain is E3 ubiquitin-protein ligase TRIM9 (Trim9) from Rattus norvegicus (Rat).